The sequence spans 151 residues: Probable flavodoxin 2 (151 aa).

A Flavodoxin-like domain is found at 4–144; sequence ILLVYATMSG…ELINFGRQFA (141 aa). FMN-binding positions include 10-14 and 88-119; these read TMSGN and VFGS…DIVL.

This sequence belongs to the flavodoxin family. It depends on FMN as a cofactor.

Its function is as follows. Low-potential electron donor to a number of redox enzymes. This chain is Probable flavodoxin 2 (ykuP), found in Bacillus subtilis (strain 168).